Consider the following 352-residue polypeptide: MDYQVSSPTYDIDYYTSEPCQKINVKQIAAHLLPPLYSLVFIFGFVGNILVVLILINCKRLKSMTDIYLLNLAISDLLFLLTVPFWAHYAAAQWDFGNIMCQLLTGLYFIGFFSGIFFIILLTIDRYLAIVHAVFALKARTVTFGVVTSVITWVVAVFASLPGIIFTRSQREGLHYTCSSHFPYSQYQFWKNFRTLKIVILGLVLPLLVMVICYSGILKTLLRCRNEKKRHRAVRLIFTIMIVYFLFWAPYNIVLLLNTFQEFFGLNNCSSSNRLDQAMQVTETLGMTHCCINPIIYAFVGEKFRNYLLVFFQKHIAKRFCKCCSIFQQEAPERASSVYTRSTGEQEISVGL.

The Extracellular portion of the chain corresponds to 1-30 (MDYQVSSPTYDIDYYTSEPCQKINVKQIAA). The residue at position 3 (Tyr3) is a Sulfotyrosine. 2 O-linked (GalNAc...) serine glycosylation sites follow: Ser6 and Ser7. A sulfotyrosine mark is found at Tyr10, Tyr14, and Tyr15. Intrachain disulfides connect Cys20–Cys269 and Cys101–Cys178. Residues 31-58 (HLLPPLYSLVFIFGFVGNILVVLILINC) form a helical membrane-spanning segment. Topologically, residues 59 to 68 (KRLKSMTDIY) are cytoplasmic. A helical membrane pass occupies residues 69 to 89 (LLNLAISDLLFLLTVPFWAHY). Over 90–102 (AAAQWDFGNIMCQ) the chain is Extracellular. A helical transmembrane segment spans residues 103–124 (LLTGLYFIGFFSGIFFIILLTI). Over 125–141 (DRYLAIVHAVFALKART) the chain is Cytoplasmic. A helical transmembrane segment spans residues 142–166 (VTFGVVTSVITWVVAVFASLPGIIF). The Extracellular portion of the chain corresponds to 167-198 (TRSQREGLHYTCSSHFPYSQYQFWKNFRTLKI). Residues 199–218 (VILGLVLPLLVMVICYSGIL) traverse the membrane as a helical segment. At 219–235 (KTLLRCRNEKKRHRAVR) the chain is on the cytoplasmic side. Residues 236-260 (LIFTIMIVYFLFWAPYNIVLLLNTF) form a helical membrane-spanning segment. At 261–277 (QEFFGLNNCSSSNRLDQ) the chain is on the extracellular side. The chain crosses the membrane as a helical span at residues 278–301 (AMQVTETLGMTHCCINPIIYAFVG). The Cytoplasmic segment spans residues 302–352 (EKFRNYLLVFFQKHIAKRFCKCCSIFQQEAPERASSVYTRSTGEQEISVGL). S-palmitoyl cysteine attachment occurs at residues Cys321, Cys323, and Cys324. 4 positions are modified to phosphoserine; by BARK1: Ser336, Ser337, Ser342, and Ser349.

The protein belongs to the G-protein coupled receptor 1 family. As to quaternary structure, interacts with PRAF2. Efficient ligand binding to CCL3/MIP-1alpha and CCL4/MIP-1beta requires sulfation, O-glycosylation and sialic acid modifications. Glycosylation on Ser-6 is required for efficient binding of CCL4. Interacts with GRK2. Interacts with ARRB1 and ARRB2. Interacts with CNIH4. Interacts with S100A4; this interaction stimulates T-lymphocyte chemotaxis. Post-translationally, sulfated on at least 2 of the N-terminal tyrosines. Sulfation is required for efficient binding of the chemokines, CCL3 and CCL4. Palmitoylation in the C-terminal is important for cell surface expression. In terms of processing, phosphorylation on serine residues in the C-terminal is stimulated by binding CC chemokines especially by APO-RANTES. Post-translationally, O-glycosylated, but not N-glycosylated. Ser-6 appears to be the major site even if Ser-7 may be also O-glycosylated. Also sialylated glycans present which contribute to chemokine binding. Thr-16 and Ser-17 may also be glycosylated and, if so, with small moieties such as a T-antigen.

Its subcellular location is the cell membrane. Receptor for a number of inflammatory CC-chemokines including CCL3/MIP-1-alpha, CCL4/MIP-1-beta and RANTES and subsequently transduces a signal by increasing the intracellular calcium ion level. May play a role in the control of granulocytic lineage proliferation or differentiation. Participates in T-lymphocyte migration to the infection site by acting as a chemotactic receptor. The polypeptide is C-C chemokine receptor type 5 (CCR5) (Mandrillus sphinx (Mandrill)).